A 445-amino-acid chain; its full sequence is UPF0210 protein SSA_2018 (445 aa).

This sequence belongs to the UPF0210 family. As to quaternary structure, homodimer.

This is UPF0210 protein SSA_2018 from Streptococcus sanguinis (strain SK36).